Consider the following 705-residue polypeptide: Tryptophan synthase (705 aa).

Residues Met1–Lys293 are tryptophan synthase alpha chain. Catalysis depends on proton acceptor residues Glu49 and Asp60. Positions Lys266 to Pro287 are disordered. Residues Gly294–Lys705 form a tryptophan synthase beta chain region. Lys381 is modified (N6-(pyridoxal phosphate)lysine).

In the N-terminal section; belongs to the TrpA family. The protein in the C-terminal section; belongs to the TrpB family. The cofactor is pyridoxal 5'-phosphate.

It catalyses the reaction (1S,2R)-1-C-(indol-3-yl)glycerol 3-phosphate + L-serine = D-glyceraldehyde 3-phosphate + L-tryptophan + H2O. It participates in amino-acid biosynthesis; L-tryptophan biosynthesis; L-tryptophan from chorismate: step 5/5. This Coprinopsis cinerea (Inky cap fungus) protein is Tryptophan synthase (TRP-1).